We begin with the raw amino-acid sequence, 95 residues long: Integration host factor subunit beta (95 aa).

It belongs to the bacterial histone-like protein family. Heterodimer of an alpha and a beta chain.

This protein is one of the two subunits of integration host factor, a specific DNA-binding protein that functions in genetic recombination as well as in transcriptional and translational control. In Shewanella putrefaciens (strain CN-32 / ATCC BAA-453), this protein is Integration host factor subunit beta.